A 339-amino-acid polypeptide reads, in one-letter code: NADH-quinone oxidoreductase subunit H (339 aa).

9 consecutive transmembrane segments (helical) span residues 10–30 (FPLT…ILCV), 50–70 (PNVV…KLLF), 82–102 (ILFI…WAVI), 115–135 (VGVL…IIAG), 155–175 (ISYE…TGTL), 187–207 (LPWW…ISVL), 235–255 (MGFA…SAMT), 275–295 (IPGF…FLWI), and 311–331 (GWKV…SVLF).

Belongs to the complex I subunit 1 family. As to quaternary structure, NDH-1 is composed of 14 different subunits. Subunits NuoA, H, J, K, L, M, N constitute the membrane sector of the complex.

Its subcellular location is the cell inner membrane. The enzyme catalyses a quinone + NADH + 5 H(+)(in) = a quinol + NAD(+) + 4 H(+)(out). In terms of biological role, NDH-1 shuttles electrons from NADH, via FMN and iron-sulfur (Fe-S) centers, to quinones in the respiratory chain. The immediate electron acceptor for the enzyme in this species is believed to be ubiquinone. Couples the redox reaction to proton translocation (for every two electrons transferred, four hydrogen ions are translocated across the cytoplasmic membrane), and thus conserves the redox energy in a proton gradient. This subunit may bind ubiquinone. The polypeptide is NADH-quinone oxidoreductase subunit H (Rickettsia typhi (strain ATCC VR-144 / Wilmington)).